Here is a 201-residue protein sequence, read N- to C-terminus: NADH-ubiquinone oxidoreductase chain 6 (201 aa).

The next 5 helical transmembrane spans lie at leucine 4–valine 24, valine 28–leucine 48, leucine 55–isoleucine 75, phenylalanine 88–isoleucine 108, and leucine 151–leucine 171.

It belongs to the complex I subunit 6 family.

It localises to the mitochondrion membrane. The enzyme catalyses a ubiquinone + NADH + 5 H(+)(in) = a ubiquinol + NAD(+) + 4 H(+)(out). Core subunit of the mitochondrial membrane respiratory chain NADH dehydrogenase (Complex I) that is believed to belong to the minimal assembly required for catalysis. Complex I functions in the transfer of electrons from NADH to the respiratory chain. The immediate electron acceptor for the enzyme is believed to be ubiquinone. The sequence is that of NADH-ubiquinone oxidoreductase chain 6 (ND6) from Cyanidium caldarium (Red alga).